Consider the following 91-residue polypeptide: Acylphosphatase (91 aa).

The 87-residue stretch at 5–91 (RLTAWVRGHV…RGSFTGFEER (87 aa)) folds into the Acylphosphatase-like domain. Residues Arg20 and Asn38 contribute to the active site.

It belongs to the acylphosphatase family.

The enzyme catalyses an acyl phosphate + H2O = a carboxylate + phosphate + H(+). The protein is Acylphosphatase (acyP) of Thermobifida fusca (strain YX).